The sequence spans 148 residues: FAD synthase (148 aa).

ATP is bound by residues 14–15 (VF), 19–22 (HVGH), and aspartate 100.

Belongs to the archaeal FAD synthase family. In terms of assembly, homodimer. A divalent metal cation is required as a cofactor.

The enzyme catalyses FMN + ATP + H(+) = FAD + diphosphate. The protein operates within cofactor biosynthesis; FAD biosynthesis; FAD from FMN: step 1/1. Functionally, catalyzes the transfer of the AMP portion of ATP to flavin mononucleotide (FMN) to produce flavin adenine dinucleotide (FAD) coenzyme. This Thermococcus sibiricus (strain DSM 12597 / MM 739) protein is FAD synthase.